The primary structure comprises 94 residues: Co-chaperonin GroES (94 aa).

It belongs to the GroES chaperonin family. Heptamer of 7 subunits arranged in a ring. Interacts with the chaperonin GroEL.

The protein resides in the cytoplasm. In terms of biological role, together with the chaperonin GroEL, plays an essential role in assisting protein folding. The GroEL-GroES system forms a nano-cage that allows encapsulation of the non-native substrate proteins and provides a physical environment optimized to promote and accelerate protein folding. GroES binds to the apical surface of the GroEL ring, thereby capping the opening of the GroEL channel. This is Co-chaperonin GroES from Clostridium perfringens (strain ATCC 13124 / DSM 756 / JCM 1290 / NCIMB 6125 / NCTC 8237 / Type A).